A 228-amino-acid chain; its full sequence is uncharacterized protein (228 aa).

In terms of domain architecture, ABC transporter spans 7–228; that stretch reads VEVHHLKKSV…LVNGQLQEEA (222 aa). ATP is bound at residue 43–50; sequence GESGSGKS.

It belongs to the ABC transporter superfamily.

This is an uncharacterized protein from Escherichia coli O157:H7.